The primary structure comprises 120 residues: Large ribosomal subunit protein uL22 (120 aa).

Residues 1–25 (MFVNKKYTAKGKNLPSSPKKVRPIA) are disordered.

The protein belongs to the universal ribosomal protein uL22 family. In terms of assembly, part of the 50S ribosomal subunit.

This protein binds specifically to 23S rRNA; its binding is stimulated by other ribosomal proteins, e.g. L4, L17, and L20. It is important during the early stages of 50S assembly. It makes multiple contacts with different domains of the 23S rRNA in the assembled 50S subunit and ribosome. Its function is as follows. The globular domain of the protein is located near the polypeptide exit tunnel on the outside of the subunit, while an extended beta-hairpin is found that lines the wall of the exit tunnel in the center of the 70S ribosome. This chain is Large ribosomal subunit protein uL22, found in Borrelia duttonii (strain Ly).